Consider the following 498-residue polypeptide: Glycerol kinase (498 aa).

Residue Thr12 coordinates ADP. ATP-binding residues include Thr12, Thr13, and Ser14. Thr12 lines the sn-glycerol 3-phosphate pocket. Residue Arg16 coordinates ADP. Sn-glycerol 3-phosphate-binding residues include Arg82, Glu83, Tyr134, and Asp243. Glycerol contacts are provided by Arg82, Glu83, Tyr134, Asp243, and Gln244. The ADP site is built by Thr265 and Gly308. ATP-binding residues include Thr265, Gly308, Gln312, and Gly411. Gly411 contacts ADP.

Belongs to the FGGY kinase family.

The enzyme catalyses glycerol + ATP = sn-glycerol 3-phosphate + ADP + H(+). It participates in polyol metabolism; glycerol degradation via glycerol kinase pathway; sn-glycerol 3-phosphate from glycerol: step 1/1. Inhibited by fructose 1,6-bisphosphate (FBP). Its function is as follows. Key enzyme in the regulation of glycerol uptake and metabolism. Catalyzes the phosphorylation of glycerol to yield sn-glycerol 3-phosphate. The sequence is that of Glycerol kinase from Brucella suis biovar 1 (strain 1330).